A 622-amino-acid polypeptide reads, in one-letter code: Dynein axonemal assembly factor 1 (622 aa).

Positions 1–11 (MHPEVSEQQAD) are enriched in polar residues. Residues 1–80 (MHPEVSEQQA…ARNDRDDRGP (80 aa)) are disordered. Positions 32–42 (VRKEEINETKE) are enriched in basic and acidic residues. Residues 48-59 (STTSCQSQKQQS) show a composition bias toward low complexity. Positions 62–80 (SRLDCRSGYARNDRDDRGP) are enriched in basic and acidic residues. LRR repeat units lie at residues 101–123 (ALND…EEYT), 124–145 (GLRC…QAQS), 146–167 (ELRC…EPLQ), 168–189 (KLDA…SCLP), 190–211 (VLNT…QHLR), and 215–236 (RLCV…SVLE). The LRRCT domain maps to 249-288 (NPVTKHIPNYRRTVTVRLKQLTYLDDRPVFPKDRACAEAW). Positions 326–336 (EERKKARDKGE) are enriched in basic and acidic residues. Disordered regions lie at residues 326 to 360 (EERK…PLGE) and 399 to 431 (EEPD…TDGT). Low complexity-rich tracts occupy residues 337 to 351 (TPLP…TSPE) and 415 to 428 (VATA…VAAT). Ser-349 carries the post-translational modification Phosphoserine. Residues Ser-464 and Ser-487 each carry the phosphoserine modification. 2 disordered regions span residues 480–503 (ISSL…EHTP) and 525–622 (RVPL…FGLD). Positions 539–550 (APETQGQVFSTT) are enriched in polar residues.

This sequence belongs to the DNAAF1 family.

It localises to the cell projection. It is found in the cilium. Functionally, cilium-specific protein required for the stability of the ciliary architecture. Plays a role in cytoplasmic preassembly of dynein arms. Involved in regulation of microtubule-based cilia and actin-based brush border microvilli. In Peromyscus polionotus (Oldfield mouse), this protein is Dynein axonemal assembly factor 1 (Dnaaf1).